Consider the following 234-residue polypeptide: Exotoxin type G (234 aa).

Positions 1–24 (MKTNILTIIILSCVFSYGSQLAYA) are cleaved as a signal peptide.

The protein belongs to the staphylococcal/streptococcal toxin family.

Functionally, mitogenic for human peripheral blood lymphocytes. The sequence is that of Exotoxin type G (speG) from Streptococcus pyogenes serotype M1.